The chain runs to 132 residues: uncharacterized protein (132 aa).

A helical membrane pass occupies residues Leu66–Leu86.

It is found in the membrane. This is an uncharacterized protein from Saccharomyces cerevisiae (strain ATCC 204508 / S288c) (Baker's yeast).